Reading from the N-terminus, the 150-residue chain is Troponin C, isoform 2B (150 aa).

Methionine 1 is subject to N-acetylmethionine. 4 EF-hand domains span residues 7–42 (EQLS…MGVK), 43–78 (ISEK…FLIE), 83–118 (ALKA…LDNR), and 119–150 (LTEE…MMNG). Residues aspartate 56, aspartate 58, serine 60, glutamate 62, and glutamate 67 each contribute to the Ca(2+) site. Positions 132, 134, 136, 138, and 143 each coordinate Ca(2+).

It belongs to the troponin C family.

Functionally, troponin is the central regulatory protein of striated muscle contraction. Tn consists of three components: Tn-I which is the inhibitor of actomyosin ATPase, Tn-T which contains the binding site for tropomyosin and Tn-C. The binding of calcium to Tn-C abolishes the inhibitory action of Tn on actin filaments. In Homarus americanus (American lobster), this protein is Troponin C, isoform 2B.